A 223-amino-acid chain; its full sequence is Guanylate kinase (223 aa).

Positions 1–22 (MTADGGPDVRHGTRPEPSGDGR) are disordered. Residues 7–19 (PDVRHGTRPEPSG) show a composition bias toward basic and acidic residues. A Guanylate kinase-like domain is found at 21-201 (GRVVVLSGPS…ACAELVSLLV (181 aa)). 28-35 (GPSAVGKS) lines the ATP pocket. A disordered region spans residues 204–223 (APDRHDTSGRTGRQTTSHPD). A compositionally biased stretch (polar residues) spans 212–223 (GRTGRQTTSHPD).

It belongs to the guanylate kinase family.

The protein localises to the cytoplasm. The enzyme catalyses GMP + ATP = GDP + ADP. Functionally, essential for recycling GMP and indirectly, cGMP. This Mycolicibacterium paratuberculosis (strain ATCC BAA-968 / K-10) (Mycobacterium paratuberculosis) protein is Guanylate kinase.